We begin with the raw amino-acid sequence, 42 residues long: Alpha-conotoxin VnIB (42 aa).

A propeptide spanning residues 1–22 (ASDGRNAAADDKASDPIALTVR) is cleaved from the precursor. 2 disulfide bridges follow: cysteine 25/cysteine 31 and cysteine 26/cysteine 38. Position 39 is a glycine amide (glycine 39).

This sequence belongs to the conotoxin A superfamily. As to expression, expressed by the venom duct.

It is found in the secreted. Functionally, alpha-conotoxins act on postsynaptic membranes, they bind to the nicotinic acetylcholine receptors (nAChR) and thus inhibit them. This toxin potently and selectively inhibits human and rat alpha-6-beta-4/CHRNA6-CHRNB4 nAChR (IC(50)=12 nM on rat nAChR). It exhibits rapid binding and unbinding at this receptor. It also shows activity on rat alpha-6-beta-4/CHRNA6-CHRNB4 (IC(50)=12 nM), human alpha-6/alpha-3-beta-4 (CHRNA6/CHRNA3-CHRNB4) (IC(50)=5.3 nM), rat alpha-6/alpha-3-beta-4 (CHRNA6/CHRNA3-CHRNB4) (IC(50)=18 nM), rat alpha-3-beta-4/CHRNA3-CHRNB4 (IC(50)=320 nM), and rat alpha-6/alpha-3-beta-2-beta-3 (CHRNA6/CHRNA3-CHRNB2-CHRNB3) (IC(50)=4 uM). The sequence is that of Alpha-conotoxin VnIB from Conus ventricosus (Mediterranean cone).